The sequence spans 271 residues: Ferric enterobactin transport ATP-binding protein FepC (271 aa).

One can recognise an ABC transporter domain in the interval 8-244 (LRGEQLTLGY…ELIERIYGLR (237 aa)). Residue 40 to 47 (GPNGCGKS) participates in ATP binding.

The protein belongs to the ABC transporter superfamily. As to quaternary structure, the complex is composed of two ATP-binding proteins (FepC), two transmembrane proteins (FepD and FepG) and a solute-binding protein (FepB).

The protein resides in the cell inner membrane. It catalyses the reaction Fe(III)-enterobactin(out) + ATP + H2O = Fe(III)-enterobactin(in) + ADP + phosphate + H(+). Its function is as follows. Part of the ABC transporter complex FepBDGC involved in ferric enterobactin uptake. Responsible for energy coupling to the transport system. This Escherichia coli (strain K12) protein is Ferric enterobactin transport ATP-binding protein FepC (fepC).